Reading from the N-terminus, the 91-residue chain is Acylphosphatase (91 aa).

One can recognise an Acylphosphatase-like domain in the interval Arg-3–Arg-90. Catalysis depends on residues Arg-18 and Asn-36.

It belongs to the acylphosphatase family.

The catalysed reaction is an acyl phosphate + H2O = a carboxylate + phosphate + H(+). This Methanospirillum hungatei JF-1 (strain ATCC 27890 / DSM 864 / NBRC 100397 / JF-1) protein is Acylphosphatase (acyP).